We begin with the raw amino-acid sequence, 3123 residues long: Protein bark beetle (3123 aa).

A signal peptide spans 1-34 (MKLQHHKTNRQRISKPHRDPKWASICLWLLVTLA). Over 35-2714 (FSTHLARSQE…IIDPLSWRAD (2680 aa)) the chain is Extracellular. Residues 83–104 (DVTVAPQGSTPSMTSSSSYTEL) form a disordered region. Over residues 91–102 (STPSMTSSSSYT) the composition is skewed to low complexity. In terms of domain architecture, SRCR 1 spans 191–295 (IRLVDGPTPV…YHNDLGIQCL (105 aa)). 3 cysteine pairs are disulfide-bonded: Cys216/Cys284, Cys231/Cys294, and Cys262/Cys272. An N-linked (GlcNAc...) asparagine glycan is attached at Asn221. PbH1 repeat units follow at residues 358-380 (GLPP…NSTR), 382-404 (WAGF…FVNS), and 406-428 (QGAV…KYVG). Residues Asn377, Asn389, and Asn403 are each glycosylated (N-linked (GlcNAc...) asparagine). Residues Cys446 and Cys474 are joined by a disulfide bond. The region spanning 446–559 (CTLPTTSGQT…NGFFRMTSGD (114 aa)) is the CUB domain. 2 N-linked (GlcNAc...) asparagine glycosylation sites follow: Asn498 and Asn523. 3 PbH1 repeats span residues 562–584 (AYDL…AIDN), 586–609 (RSKL…HVTS), and 611–633 (AGDV…NITY). 8 N-linked (GlcNAc...) asparagine glycosylation sites follow: Asn615, Asn620, Asn630, Asn639, Asn658, Asn672, Asn702, and Asn709. PbH1 repeat units follow at residues 756–778 (NLQG…FINN) and 789–809 (PVKL…HVVS). 3 N-linked (GlcNAc...) asparagine glycosylation sites follow: Asn834, Asn900, and Asn1040. Residues 1071-1175 (VRLVGGAGAN…HENDVGLRCY (105 aa)) form the SRCR 2 domain. Intrachain disulfides connect Cys1096–Cys1164, Cys1109–Cys1174, and Cys1144–Cys1154. PbH1 repeat units follow at residues 1219 to 1241 (HARH…GIIY) and 1248 to 1270 (KSVN…SLKQ). N-linked (GlcNAc...) asparagine glycosylation is present at Asn1375. PbH1 repeat units follow at residues 1451–1475 (VPTL…YYNR) and 1489–1511 (NESI…LIRS). N-linked (GlcNAc...) asparagine glycans are attached at residues Asn1489, Asn1520, and Asn1529. The stretch at 1553–1575 (LFHYVIQDTTFEQNTHGGFQVSL) is one PbH1 13 repeat. Residues Asn1584, Asn1593, and Asn1614 are each glycosylated (N-linked (GlcNAc...) asparagine). The PbH1 14 repeat unit spans residues 1722 to 1744 (LYRNLIAENEMDYNLVAGVRSAR). N-linked (GlcNAc...) asparagine glycosylation is found at Asn1883, Asn1920, and Asn1940. One can recognise an SRCR 3 domain in the interval 1912 to 2037 (IRLCTSANNC…DDVFVFVSCN (126 aa)). Intrachain disulfides connect Cys1950/Cys2025, Cys1963/Cys2036, and Cys2000/Cys2010. 2 PbH1 repeats span residues 2104–2126 (HKNP…NMIA) and 2128–2150 (SGKL…SIVS). Residues Asn2139, Asn2231, Asn2251, Asn2314, and Asn2357 are each glycosylated (N-linked (GlcNAc...) asparagine). PbH1 repeat units lie at residues 2337–2361 (TPTL…FSTC), 2372–2393 (MNSL…RIRA), and 2401–2424 (SLRG…YVEG). N-linked (GlcNAc...) asparagine glycosylation is found at Asn2459, Asn2536, Asn2546, Asn2566, Asn2596, and Asn2636. A helical transmembrane segment spans residues 2715–2735 (IFAISIISAFVLAIILLILVA). Over 2736–3123 (FCWFAKSKHR…SHSQPLETAM (388 aa)) the chain is Cytoplasmic. 4 disordered regions span residues 2766 to 2789 (IDPQ…LSKG), 2961 to 2983 (YQRS…PFDQ), 2996 to 3015 (LYRP…ADMR), and 3025 to 3123 (RSSK…ETAM). The span at 2778 to 2788 (YNMSSNGTLSK) shows a compositional bias: polar residues. The segment covering 2964 to 2973 (SSHSSFMPHR) has biased composition (low complexity). Low complexity-rich tracts occupy residues 3047-3057 (PNVAPAGGPAQ) and 3068-3078 (SEESSPTTPSP). Polar residues predominate over residues 3107-3123 (PLQTNGRSHSQPLETAM).

In terms of processing, N-glycosylated. Post-translationally, may be proteolytically cleaved in the extracellular domain. In terms of tissue distribution, expression detected in embryonic epithelia and central nervous system (at protein level). First detected during stage 13 in the tracheal system, the foregut, the hindgut, the salivary glands and the epidermis. Expression persists in these tissues until the end of embryogenesis. Expression in epithelia declines from late stage 15 and expression appears in the central nervous system during stage 16.

The protein resides in the cell membrane. The protein localises to the cell junction. Its subcellular location is the septate junction. It is found in the adherens junction. Functionally, required for the maturation but not the establishment of septate junctions in developing epithelial cells and is involved in epithelial cell adhesion during septate junction maturation. Plays a role in the proper localization of the septate junction core components pck/mega, kune, Nrx-IV and Nrg during late embryogenesis. Involved in the formation of tricellular junctions which mediate cell contact where three epithelial cells meet but not of bicellular junctions. Required for the accumulation of Gli at tricellular junctions. The protein is Protein bark beetle of Drosophila melanogaster (Fruit fly).